A 1002-amino-acid chain; its full sequence is Ephrin type-B receptor 5 (1002 aa).

The N-terminal stretch at 1 to 29 (MDSNADISARRVSGMDWLWLVCFFHLVTS) is a signal peptide. At 30-564 (LEEILLDTTG…AQDRLPLIVG (535 aa)) the chain is on the extracellular side. Positions 31-213 (EEILLDTTGE…FFYKCPAVVK (183 aa)) constitute an Eph LBD domain. 2 consecutive Fibronectin type-III domains span residues 344–452 (APRD…TSQS) and 453–548 (VPSA…TLMA). An N-linked (GlcNAc...) asparagine glycan is attached at N446. Residues 565 to 585 (SALGGLAFLVIAAIAILAIIF) form a helical membrane-spanning segment. The Cytoplasmic segment spans residues 586-1002 (KSKRRETPYT…HLNQLEPVEV (417 aa)). Positions 637–900 (IKIEEVIGSG…QIVSALDKMI (264 aa)) constitute a Protein kinase domain. ATP is bound by residues 643–651 (IGSGEFGEV) and K669. The active-site Proton acceptor is the D762. A disordered region spans residues 906–928 (LKATGTGSSRPSQPLLSNSPPDF). A compositionally biased stretch (polar residues) spans 910–928 (GTGSSRPSQPLLSNSPPDF). The SAM domain occupies 929–993 (PSLSNAHEWL…LNSIQLMKVH (65 aa)). The short motif at 1000–1002 (VEV) is the PDZ-binding element.

Belongs to the protein kinase superfamily. Tyr protein kinase family. Ephrin receptor subfamily. In terms of tissue distribution, most abundant in thymus and detectable in brain, retina, kidney, lung and heart. Not detected in skeletal muscle and liver.

Its subcellular location is the membrane. It catalyses the reaction L-tyrosyl-[protein] + ATP = O-phospho-L-tyrosyl-[protein] + ADP + H(+). Receptor for members of the ephrin-B family. In Gallus gallus (Chicken), this protein is Ephrin type-B receptor 5 (EPHB5).